Consider the following 1941-residue polypeptide: Myosin-2 (1941 aa).

The Myosin N-terminal SH3-like domain maps to 33 to 82; that stretch reads DAKTSVFVAEPKESFVKGTIQSREGGKVTVKTEGGATLTVKDDQVFPMNP. Thr-64 and Thr-69 each carry phosphothreonine. The 699-residue stretch at 86–784 folds into the Myosin motor domain; sequence DKIEDMAMMT…LLGLLEEMRD (699 aa). Lys-130 carries the N6,N6,N6-trimethyllysine modification. 179-186 contacts ATP; sequence GESGAGKT. Tyr-389 carries the phosphotyrosine modification. Residue Ser-392 is modified to Phosphoserine. Residue Thr-419 is modified to Phosphothreonine. Ser-625 is modified (phosphoserine). The segment at 661 to 683 is actin-binding; that stretch reads LNKLMTNLRSTHPHFVRCIIPNE. His-759 carries the post-translational modification Pros-methylhistidine. The interval 763-777 is actin-binding; that stretch reads KFGHTKVFFKAGLLG. The region spanning 787–816 is the IQ domain; the sequence is LAQLITRTQARCRGFLARVEYQRMVERREA. Residues 845–1941 adopt a coiled-coil conformation; it reads LLKSAETEKE…EVHTKVISEE (1097 aa). A phosphoserine mark is found at Ser-1094 and Ser-1098. Disordered regions lie at residues 1128–1149 and 1155–1174; these read IEAERASRAKAEKQRSDLSREL and RLEEAGGATSAQIEMNKKRE. Positions 1130 to 1149 are enriched in basic and acidic residues; sequence AERASRAKAEKQRSDLSREL. Phosphoserine is present on residues Ser-1164 and Ser-1239. Thr-1243 bears the Phosphothreonine mark. Ser-1245 bears the Phosphoserine mark. Thr-1257 is subject to Phosphothreonine. Ser-1263 is modified (phosphoserine). Position 1288 is a phosphothreonine (Thr-1288). 4 positions are modified to phosphoserine: Ser-1290, Ser-1294, Ser-1305, and Ser-1308. Thr-1469 bears the Phosphothreonine mark. At Ser-1476 the chain carries Phosphoserine. Phosphotyrosine is present on Tyr-1494. Phosphoserine is present on Ser-1497. At Thr-1503 the chain carries Phosphothreonine. The residue at position 1516 (Ser-1516) is a Phosphoserine. At Thr-1519 the chain carries Phosphothreonine. Ser-1556, Ser-1576, Ser-1602, Ser-1605, Ser-1716, and Ser-1728 each carry phosphoserine. A phosphothreonine mark is found at Thr-1732 and Thr-1738. Ser-1741 carries the post-translational modification Phosphoserine.

It belongs to the TRAFAC class myosin-kinesin ATPase superfamily. Myosin family. In terms of assembly, muscle myosin is a hexameric protein that consists of 2 heavy chain subunits (MHC), 2 alkali light chain subunits (MLC) and 2 regulatory light chain subunits (MLC-2). Interacts with GCSAM.

The protein resides in the cytoplasm. The protein localises to the myofibril. In terms of biological role, myosins are actin-based motor molecules with ATPase activity essential for muscle contraction. The protein is Myosin-2 of Homo sapiens (Human).